Here is a 149-residue protein sequence, read N- to C-terminus: Small ribosomal subunit protein uS15 (149 aa).

A compositionally biased stretch (basic residues) spans 1 to 14 (MGRMHTHRHGKSHS). A disordered region spans residues 1–20 (MGRMHTHRHGKSHSIRPATL).

Belongs to the universal ribosomal protein uS15 family. Part of the 30S ribosomal subunit.

The chain is Small ribosomal subunit protein uS15 from Nitrosopumilus maritimus (strain SCM1).